Consider the following 478-residue polypeptide: Protein ZINC INDUCED FACILITATOR-LIKE 1 (478 aa).

12 helical membrane-spanning segments follow: residues 43 to 63 (IIVLCTALPISSLFPFLYFMI), 81 to 101 (FVGCSFMLGRAFTSVAWGLVA), 108 to 128 (PVILIGTASVVVFNTLFGLSL), 130 to 150 (FWMAIITRFCLGSFNGLLGPI), 169 to 189 (AVSTAWGIGLIIGPAIGGFLA), 208 to 228 (FPFFLPCLAISVFAFLVTIVS), 280 to 300 (IIVYCVFSLHDMAYTEIFSLW), 317 to 337 (VGSVLAFSGFGLLIFQLSLYS), 346 to 367 (IIVTRISGSLAMVVLSCYPLIA), 378 to 398 (VTSASVAKSVLGTSAITGLFI), 415 to 435 (IAMTAMSLFKAIGPAAAGIIF), and 453 to 473 (VFFILNVVLALGVVLTFKPFL).

The protein belongs to the major facilitator superfamily. As to expression, predominantly expressed in roots and stomatal guard cells. Detected in anther stamen filaments and shoot apical meristem. In the mature portion of roots, restricted to the cortex. At the root tip, highly expressed in both the cortical and epidermal cell layers of the apical meristem and the transition zone, while absent from the quiescent center or the columella cells. Not detected in lateral root primordia.

Its subcellular location is the cell membrane. The protein resides in the vacuole membrane. In terms of biological role, major facilitator superfamily (MFS) transporter probably involved in 2,4-dichlorophenoxyacetic acid (2,4-D) export. K(+) may be the physiological substrate of the transporter. Its function is as follows. Modulates root auxin-related processes. Involved in auxin efflux and acts as a positive regulator of shootward transport at the root apex. May mediate proton efflux from the vacuolar compartment. Functionally, mediates drought stress tolerance by regulating stomatal closure. The polypeptide is Protein ZINC INDUCED FACILITATOR-LIKE 1 (ZIFL1) (Arabidopsis thaliana (Mouse-ear cress)).